We begin with the raw amino-acid sequence, 244 residues long: Serine acetyltransferase (244 aa).

The protein belongs to the transferase hexapeptide repeat family.

Its subcellular location is the cytoplasm. The catalysed reaction is L-serine + acetyl-CoA = O-acetyl-L-serine + CoA. Its pathway is amino-acid biosynthesis; L-cysteine biosynthesis; L-cysteine from L-serine: step 1/2. The protein is Serine acetyltransferase (cysE) of Synechococcus elongatus (strain ATCC 33912 / PCC 7942 / FACHB-805) (Anacystis nidulans R2).